Consider the following 886-residue polypeptide: Peptidyl-lysine N-acetyltransferase PatZ (886 aa).

The 37-residue stretch at 487–523 (QPILQAYGMNTLPTWIASDSTEAVHIAEQIGYPVALK) folds into the ATP-grasp domain. Residues 726 to 881 (CLFRPILPED…GIVGLTLNLA (156 aa)) enclose the N-acetyltransferase domain.

The protein in the N-terminal section; belongs to the acetate CoA ligase alpha subunit family. In the central section; belongs to the acetate CoA ligase beta subunit family. Stable tetramer in solution. Oligomerizes to an octameric form by autoacetylation. Autoacetylated. Deacetylated by CobB.

It carries out the reaction L-lysyl-[protein] + acetyl-CoA = N(6)-acetyl-L-lysyl-[protein] + CoA + H(+). Functionally, catalyzes the acetyl-CoA-dependent acetylation of lysine residues of a large number of target proteins. Acetylates RNase R in exponential phase cells and RNase II. Required for the glucose-dependent acetylation on multiple lysines of alpha, beta and beta' RNAP subunits. Also acetylates acetyl-coenzyme A synthetase (Acs) and the chromosomal replication initiator protein DnaA, and inhibits their activity. Overexpression leads to the acetylation of a large number of additional proteins and inhibits motility. The chain is Peptidyl-lysine N-acetyltransferase PatZ from Escherichia coli (strain K12).